A 228-amino-acid polypeptide reads, in one-letter code: Cytochrome c oxidase subunit 2 (228 aa).

At 1–26 (MRTWSNFNLQNSASPLMEQIIFFHDH) the chain is on the mitochondrial intermembrane side. Residues 27 to 48 (TLIILIMITILVGYIMINLFFN) form a helical membrane-spanning segment. Residues 49-62 (KFINRFFLVGQMIE) lie on the Mitochondrial matrix side of the membrane. A helical transmembrane segment spans residues 63-82 (LIWTVLPAITLIFIALPSLR). The Mitochondrial intermembrane segment spans residues 83 to 228 (LLYLLDELNN…FINWINNYSY (146 aa)). Cu cation is bound by residues His-161, Cys-196, Glu-198, Cys-200, His-204, and Met-207. Glu-198 contributes to the Mg(2+) binding site.

The protein belongs to the cytochrome c oxidase subunit 2 family. As to quaternary structure, component of the cytochrome c oxidase (complex IV, CIV), a multisubunit enzyme composed of a catalytic core of 3 subunits and several supernumerary subunits. The complex exists as a monomer or a dimer and forms supercomplexes (SCs) in the inner mitochondrial membrane with ubiquinol-cytochrome c oxidoreductase (cytochrome b-c1 complex, complex III, CIII). Cu cation is required as a cofactor.

It is found in the mitochondrion inner membrane. It catalyses the reaction 4 Fe(II)-[cytochrome c] + O2 + 8 H(+)(in) = 4 Fe(III)-[cytochrome c] + 2 H2O + 4 H(+)(out). In terms of biological role, component of the cytochrome c oxidase, the last enzyme in the mitochondrial electron transport chain which drives oxidative phosphorylation. The respiratory chain contains 3 multisubunit complexes succinate dehydrogenase (complex II, CII), ubiquinol-cytochrome c oxidoreductase (cytochrome b-c1 complex, complex III, CIII) and cytochrome c oxidase (complex IV, CIV), that cooperate to transfer electrons derived from NADH and succinate to molecular oxygen, creating an electrochemical gradient over the inner membrane that drives transmembrane transport and the ATP synthase. Cytochrome c oxidase is the component of the respiratory chain that catalyzes the reduction of oxygen to water. Electrons originating from reduced cytochrome c in the intermembrane space (IMS) are transferred via the dinuclear copper A center (CU(A)) of subunit 2 and heme A of subunit 1 to the active site in subunit 1, a binuclear center (BNC) formed by heme A3 and copper B (CU(B)). The BNC reduces molecular oxygen to 2 water molecules using 4 electrons from cytochrome c in the IMS and 4 protons from the mitochondrial matrix. The polypeptide is Cytochrome c oxidase subunit 2 (COII) (Galleria mellonella (Greater wax moth)).